The following is a 433-amino-acid chain: Enolase (433 aa).

(2R)-2-phosphoglycerate is bound at residue Q167. E209 functions as the Proton donor in the catalytic mechanism. Mg(2+) contacts are provided by D246, E291, and D318. Position 326 is an N6-acetyllysine (K326). Residues K343, R372, S373, and K394 each contribute to the (2R)-2-phosphoglycerate site. The active-site Proton acceptor is the K343. N6-(2-hydroxyisobutyryl)lysine is present on K343.

The protein belongs to the enolase family. Component of the RNA degradosome, a multiprotein complex involved in RNA processing and mRNA degradation. Requires Mg(2+) as cofactor. In terms of processing, acetylated and 2-hydroxyisobutyrylated at Lys-326 and Lys-343, respectively, reducing the enolase activity. Deacetylated and de-2-hydroxyisobutyrylated by NpdA/CobB, increasing the enolase activity.

It localises to the cytoplasm. The protein localises to the secreted. It is found in the cell surface. The catalysed reaction is (2R)-2-phosphoglycerate = phosphoenolpyruvate + H2O. It functions in the pathway carbohydrate degradation; glycolysis; pyruvate from D-glyceraldehyde 3-phosphate: step 4/5. Its function is as follows. Catalyzes the reversible conversion of 2-phosphoglycerate (2-PG) into phosphoenolpyruvate (PEP). It is essential for the degradation of carbohydrates via glycolysis. This chain is Enolase, found in Proteus mirabilis (strain HI4320).